We begin with the raw amino-acid sequence, 132 residues long: Translation initiation factor 5A (132 aa).

Residue Lys36 is modified to Hypusine.

It belongs to the eIF-5A family.

It is found in the cytoplasm. Functionally, functions by promoting the formation of the first peptide bond. This chain is Translation initiation factor 5A (eIF5A), found in Pyrobaculum neutrophilum (strain DSM 2338 / JCM 9278 / NBRC 100436 / V24Sta) (Thermoproteus neutrophilus).